The sequence spans 190 residues: B3 domain-containing protein Os02g0764100 (190 aa).

A DNA-binding region (TF-B3) is located at residues 17–121; sequence FEKAVTPSDV…KLLFIDCKKN (105 aa).

It is found in the nucleus. This chain is B3 domain-containing protein Os02g0764100, found in Oryza sativa subsp. japonica (Rice).